The sequence spans 210 residues: uncharacterized protein (210 aa).

The next 5 helical transmembrane spans lie at 42 to 62 (ITLGIAFWGMLSMLGLAVLFV), 66 to 86 (ALHGVIMLLGGSYLAYLGFLM), 126 to 146 (VVVYFSSVMSLVLVNITEMWQ), 147 to 167 (IILAFAVIVVETFCYFYVISL), and 189 to 209 (AGIVFLFFGCVLVYNGINEII).

The protein belongs to the Rht family.

Its subcellular location is the cell membrane. This is an uncharacterized protein from Haemophilus influenzae (strain ATCC 51907 / DSM 11121 / KW20 / Rd).